We begin with the raw amino-acid sequence, 639 residues long: Exocyst complex component EXO70E2 (639 aa).

The protein belongs to the EXO70 family. In terms of assembly, component of the exocyst complex and of the exocyst-positive organelle (EXPO). Interacts with SEC6, SEC10A and SEC10B. In terms of tissue distribution, expressed in roots, in the root-hair zone, both in root hair and nonhair cells.

It localises to the secreted. It is found in the extracellular exosome. The protein resides in the cell membrane. Its subcellular location is the cytoplasm. The protein localises to the endomembrane system. Functionally, influences the subcellular localization patterns of other exocyst complex proteins (e.g. SEC5A, SEC15A, SEC15B and EXO84B) leading to their recruitment to exocyst, well-defined large punctate structures throughout the cytosol. Essential component for the formation and the recruitment of exocyst subunits to the exocyst-positive organelle (EXPO), a secreted double membrane structure also called extracellular exosome, that acts as a sequester for cytosolic proteins to release them into the apoplast. This is Exocyst complex component EXO70E2 from Arabidopsis thaliana (Mouse-ear cress).